The following is a 591-amino-acid chain: Aspartate--tRNA(Asp/Asn) ligase (591 aa).

Glu-174 provides a ligand contact to L-aspartate. Residues 198-201 (QLFK) are aspartate. Residue Arg-220 participates in L-aspartate binding. ATP contacts are provided by residues 220 to 222 (RDE) and Gln-229. His-450 is a binding site for L-aspartate. ATP is bound at residue Glu-483. Arg-490 is a binding site for L-aspartate. Position 535 to 538 (535 to 538 (GLDR)) interacts with ATP.

It belongs to the class-II aminoacyl-tRNA synthetase family. Type 1 subfamily. Homodimer.

Its subcellular location is the cytoplasm. The catalysed reaction is tRNA(Asx) + L-aspartate + ATP = L-aspartyl-tRNA(Asx) + AMP + diphosphate. Aspartyl-tRNA synthetase with relaxed tRNA specificity since it is able to aspartylate not only its cognate tRNA(Asp) but also tRNA(Asn). Reaction proceeds in two steps: L-aspartate is first activated by ATP to form Asp-AMP and then transferred to the acceptor end of tRNA(Asp/Asn). The polypeptide is Aspartate--tRNA(Asp/Asn) ligase (Pseudomonas fluorescens (strain Pf0-1)).